The primary structure comprises 335 residues: Methionine aminopeptidase 1D, mitochondrial (335 aa).

The transit peptide at 1–19 (MAAPSGVHLLVRRGSHRIF) directs the protein to the mitochondrion. Histidine 161 is a binding site for substrate. Residues aspartate 178, aspartate 189, and histidine 252 each contribute to the a divalent metal cation site. Histidine 259 contacts substrate. Residues glutamate 284 and glutamate 315 each contribute to the a divalent metal cation site.

This sequence belongs to the peptidase M24A family. Methionine aminopeptidase type 1 subfamily. Requires Co(2+) as cofactor. Zn(2+) serves as cofactor. It depends on Mn(2+) as a cofactor. The cofactor is Fe(2+). As to expression, overexpressed in colon cancer cell lines and colon tumors as compared to normal tissues (at protein level).

It localises to the mitochondrion. The catalysed reaction is Release of N-terminal amino acids, preferentially methionine, from peptides and arylamides.. Removes the N-terminal methionine from nascent proteins. The N-terminal methionine is often cleaved when the second residue in the primary sequence is small and uncharged (Met-Ala-, Cys, Gly, Pro, Ser, Thr, or Val). Requires deformylation of the N(alpha)-formylated initiator methionine before it can be hydrolyzed. May play a role in colon tumorigenesis. The polypeptide is Methionine aminopeptidase 1D, mitochondrial (METAP1D) (Homo sapiens (Human)).